A 142-amino-acid polypeptide reads, in one-letter code: Transcriptional regulator MraZ (142 aa).

SpoVT-AbrB domains follow at residues 5–47 (EYQH…PLDE) and 76–119 (ACEV…SKEK).

The protein belongs to the MraZ family. Forms oligomers.

It is found in the cytoplasm. It localises to the nucleoid. The protein is Transcriptional regulator MraZ of Clostridium beijerinckii (strain ATCC 51743 / NCIMB 8052) (Clostridium acetobutylicum).